We begin with the raw amino-acid sequence, 236 residues long: CD81 antigen (236 aa).

The Cytoplasmic segment spans residues 1–12 (MGVEGCTKCIKY). The chain crosses the membrane as a helical span at residues 13–33 (LLFVFNFVFWLAGGVILGVAL). Residues 34 to 63 (WLRHDPQTTSLLYLELGNKPAPNTFYVGIY) lie on the Extracellular side of the membrane. A helical membrane pass occupies residues 64–84 (ILIAVGAVMMFVGFLGCYGAI). Over 85 to 89 (QESQC) the chain is Cytoplasmic. A helical membrane pass occupies residues 90-112 (LLGTFFTCLVILFACEVAAGIWG). Residues 113–201 (FVNKDQIAKD…QKIDELFSGK (89 aa)) are Extracellular-facing. Cystine bridges form between C156-C190 and C157-C175. A helical membrane pass occupies residues 202-224 (LYLIGIAAIVVAVIMIFEMILSM). E219 provides a ligand contact to cholesterol. The Cytoplasmic segment spans residues 225 to 236 (VLCCGIRNSSVY).

The protein belongs to the tetraspanin (TM4SF) family. In terms of assembly, homodimer. Part of a complex composed of CD19, CR2/CD21, CD81 and IFITM1/CD225 in the membrane of mature B cells. Interacts (via the second extracellular domain) with CD19; this interaction is initiated early during biosynthesis in the ER and enables trafficking of only properly folded CD19. Part of a complex that includes MHC class II/HLA-DR molecules and IFITM1. Interacts with IFITM1. Interacts with IFITM2 and IFITM3. Part of integrin-tetraspanin complex composed of CD9, CD81, beta-1 and beta-2 integrins in the membrane of monocyte/macrophages. Interacts (via the second extracellular domain) with integrin ITGAV:ITGB3. Interacts with CD247/CD3 zeta, ICAM1 and CD9 at the immune synapse on T cell membrane. Part of a GPCR-tetraspanin complex consisting at least of ADGRG1, CD81, possibly CD9, and GNA11 in which CD81 enhances the association of ADGRG1 with GNA11. Part of a complex composed of CD9, CD81, PTGFRN and IGSF8. Interacts directly with IGSF8. Interacts with CD53 and SCIMP. Interacts with SAMHD1 (via its C-terminus). Interacts with glypican GPC3 and with the transcriptional repressor HHEX; binding to GPC3 decreases the availability of free CD81 for binding to HHEX, resulting in nuclear translocation of HHEX and transcriptional repression. Interacts with CLDN1. Interacts with CLDN6 and CLDN9. In terms of processing, not glycosylated. Post-translationally, likely constitutively palmitoylated at low levels. Protein palmitoylation is up-regulated upon coligation of BCR and CD9-C2R-CD81 complexes in lipid rafts. Expressed in oocytes (at protein level). Highly expressed in granulosa cells. Expressed in skeletal muscle mainly in endothelial cells of endomysial capillaries, in satellite cells and myoblasts (at protein level). Expressed in hepatocytes (at protein level).

The protein localises to the cell membrane. The protein resides in the basolateral cell membrane. In terms of biological role, structural component of specialized membrane microdomains known as tetraspanin-enriched microdomains (TERMs), which act as platforms for receptor clustering and signaling. Essential for trafficking and compartmentalization of CD19 receptor on the cell surface of activated B cells. Upon initial encounter with a microbial pathogen, enables the assembly of CD19-CR2 and B cell receptor complexes at signaling TERMs, lowering the threshold dose of antigen required to trigger B cell clonal expansion and humoral immune response. In T cells, associates with CD4 or CD8 coreceptors and defines the maturation state of antigen-induced synapses with B cells. Facilitates localization of CD3 in these immune synapses, required for costimulation and sustained activation of T cells, preferentially triggering T helper type 2 immune response. Can act both as positive and negative regulator of homotypic or heterotypic cell-cell fusion processes. In myoblasts, associates with another tetraspanin CD9 in complex with PTGFRN and inhibits myotube fusion during muscle regeneration. In macrophages, associates with CD9 and beta-1 and beta-2 integrins, and prevents macrophage fusion into multinucleated giant cells specialized in ingesting complement-opsonized large particles. Also prevents the fusion between mononuclear cell progenitors into osteoclasts in charge of bone resorption. Positively regulates sperm-egg fusion and may be involved in the acrosome reaction. Regulates protein trafficking in intracellular compartments. In T cells, associates with dNTPase SAMHD1 and defines its subcellular location, enabling its degradation by the proteasome and thereby controlling intracellular dNTP levels. Also regulates integrin-dependent migration of macrophages, particularly relevant for inflammatory response in the lung. Its function is as follows. (Microbial infection) Specifically required for Plasmodium yoelii infectivity of hepatocytes, controlling sporozoite entry in hepatocytes via the parasitophorous vacuole and subsequent parasite differentiation to exoerythrocytic forms. The sequence is that of CD81 antigen from Mus musculus (Mouse).